Here is a 180-residue protein sequence, read N- to C-terminus: Shikimate kinase (180 aa).

ATP is bound at residue 14–19; that stretch reads GAGKST. Residue Ser-18 coordinates Mg(2+). Positions 36, 60, and 82 each coordinate substrate. Arg-120 provides a ligand contact to ATP. Residue Arg-140 coordinates substrate. Residue Gln-157 coordinates ATP.

Belongs to the shikimate kinase family. Monomer. Mg(2+) is required as a cofactor.

It localises to the cytoplasm. It carries out the reaction shikimate + ATP = 3-phosphoshikimate + ADP + H(+). Its pathway is metabolic intermediate biosynthesis; chorismate biosynthesis; chorismate from D-erythrose 4-phosphate and phosphoenolpyruvate: step 5/7. Catalyzes the specific phosphorylation of the 3-hydroxyl group of shikimic acid using ATP as a cosubstrate. The sequence is that of Shikimate kinase from Haemophilus influenzae (strain PittEE).